The sequence spans 92 residues: RNA-binding protein Hfq (92 aa).

In terms of domain architecture, Sm spans aspartate 9 to phenylalanine 68. Residues phenylalanine 68–glutamate 92 form a disordered region. Positions asparagine 69–alanine 81 are enriched in polar residues.

It belongs to the Hfq family. In terms of assembly, homohexamer.

In terms of biological role, RNA chaperone that binds small regulatory RNA (sRNAs) and mRNAs to facilitate mRNA translational regulation in response to envelope stress, environmental stress and changes in metabolite concentrations. Also binds with high specificity to tRNAs. This chain is RNA-binding protein Hfq, found in Shewanella loihica (strain ATCC BAA-1088 / PV-4).